The sequence spans 607 residues: Ceramide kinase (607 aa).

A DAGKc domain is found at aspartate 135–lysine 358. ATP is bound by residues histidine 145–glycine 149, threonine 176, and glycine 205–glutamate 211. Glycine 204–glycine 207 serves as a coordination point for substrate. The active-site Proton donor/acceptor is the aspartate 206. The disordered stretch occupies residues asparagine 247 to asparagine 297. A compositionally biased stretch (polar residues) spans leucine 276 to isoleucine 286. Serine 320 contacts ATP. Residues cysteine 454 to cysteine 461 carry the CXXXCXXC motif.

Ca(2+) serves as cofactor. Mg(2+) is required as a cofactor. As to expression, highly expressed in leaves and at lower levels in stems.

It carries out the reaction an N-acylsphing-4-enine + ATP = an N-acylsphing-4-enine 1-phosphate + ADP + H(+). Its function is as follows. Catalyzes specifically the phosphorylation of ceramide to form ceramide 1-phosphate. Possesses activity on ceramide analog (C6 synthetic ceramide) in vitro. Ceramide is a critical sphingolipid metabolite that induces programmed cell death (PCD) in plants and ceramide-1-phosphate has a PCD suppressive effect. Thus, ceramide phosphorylation plays a role in the modulation of PCD and CERK activity is crucial for the maintenance of cell viability. The protein is Ceramide kinase (CERK) of Oryza sativa subsp. japonica (Rice).